The primary structure comprises 234 residues: LexA repressor (234 aa).

Residues 26-46 constitute a DNA-binding region (H-T-H motif); that stretch reads FDEMKTALELTSKSGIHRLIT. Residues S155 and K193 each act as for autocatalytic cleavage activity in the active site.

The protein belongs to the peptidase S24 family. In terms of assembly, homodimer.

It catalyses the reaction Hydrolysis of Ala-|-Gly bond in repressor LexA.. In terms of biological role, represses a number of genes involved in the response to DNA damage (SOS response), including recA and lexA. In the presence of single-stranded DNA, RecA interacts with LexA causing an autocatalytic cleavage which disrupts the DNA-binding part of LexA, leading to derepression of the SOS regulon and eventually DNA repair. This Bartonella henselae (strain ATCC 49882 / DSM 28221 / CCUG 30454 / Houston 1) (Rochalimaea henselae) protein is LexA repressor.